The sequence spans 439 residues: Cysteine--tRNA ligase (439 aa).

Cysteine 26 lines the Zn(2+) pocket. The short motif at 28-38 is the 'HIGH' region element; that stretch reads PTVYNHVHIGN. Cysteine 206, histidine 231, and glutamate 235 together coordinate Zn(2+). The 'KMSKS' region motif lies at 263-267; that stretch reads KMSKS. Lysine 266 contributes to the ATP binding site.

This sequence belongs to the class-I aminoacyl-tRNA synthetase family. As to quaternary structure, monomer. Zn(2+) is required as a cofactor.

The protein localises to the cytoplasm. It catalyses the reaction tRNA(Cys) + L-cysteine + ATP = L-cysteinyl-tRNA(Cys) + AMP + diphosphate. The protein is Cysteine--tRNA ligase of Malacoplasma penetrans (strain HF-2) (Mycoplasma penetrans).